The primary structure comprises 1203 residues: DNA-directed RNA polymerase subunit beta (1203 aa).

Residues 1174–1195 (AAQEAKAAFEAEEAEKATKAEA) show a composition bias toward basic and acidic residues. A disordered region spans residues 1174–1203 (AAQEAKAAFEAEEAEKATKAEATEEAAEQE).

It belongs to the RNA polymerase beta chain family. As to quaternary structure, the RNAP catalytic core consists of 2 alpha, 1 beta, 1 beta' and 1 omega subunit. When a sigma factor is associated with the core the holoenzyme is formed, which can initiate transcription.

The enzyme catalyses RNA(n) + a ribonucleoside 5'-triphosphate = RNA(n+1) + diphosphate. In terms of biological role, DNA-dependent RNA polymerase catalyzes the transcription of DNA into RNA using the four ribonucleoside triphosphates as substrates. This Streptococcus pneumoniae (strain JJA) protein is DNA-directed RNA polymerase subunit beta.